An 875-amino-acid chain; its full sequence is MLSNTLRSNFLKFYANRHHTIVPSSPVFPHNDPSILFTNAGMNQFKDIFLNKETVSYSRATTSQKCIRAGGKHNDLDNVGHTSRHLTFFEMLGNFSFGDYFKEQAIAFAWEVSLSVFNLDPDRIYATVHEKDDEAFALWEKHLPSERIFRLTDKDNFWSMAETGPCGYCSELLFDRGEKFGTAASPLEDTEGERFLEYWNLVFMEFNRTAEGSLLALPNKHVDTGAGLERLVSILSGTNTVFEADVLRLLISKTEQLSGKTYHADEALGAAFRVIADHTRSLSFAIADGLLPGNTERGYVLRKILRRAVNYGKRLGFTQPFLADIVPSLVDTMGEAYPELRLSLSQIQEVMTMEEENYFKSLHRGGNLLQQVLKSSSSSSIISGEDAFKLKDTYGLPLDEIALLAKDYDFTVDMETFYQLEEEAKERSRKNIAKSHSSTDTVYDSLSLGENSEFVGYNDLSCDTFIEALVSNGKQVSSLKEKEKGALILKVTPFYAEKGGQIGDSGEIFCSDGTFIVSHTTSPKAGIVIHHGEVSQGQLSQDQAVTAQVNCIRRKKIGNNHTGCHLLHKALEVTLGDHIRQAGSYVDDTKIRLDFTHPKAIAPEDLASIELLVNEKIRENHRVETREAMYSDVMNSKEIKQFFGDKYSDVVRVVSAGFSHELCGGTHAEFTGDLGYFRILKEHAVATGIRRIEAVTGREAEALAHQDNENLNEIALVLQSPRDQILNKLQNVLEERKEQAKQISELENKLIHSLLDKLIDGCQQVDDVSYLIHHLPESESHRLQQYANCLHQKIPLRLISLWTTQKNGKYIIFSRISDDLVKQGLQAKDLLKIVLTPCGGRWGGKDIFAQGSADNLPQADALNNTLWQWISTQLI.

Zn(2+) is bound by residues histidine 561, histidine 565, cysteine 663, and histidine 667.

The protein belongs to the class-II aminoacyl-tRNA synthetase family. Zn(2+) is required as a cofactor.

It is found in the cytoplasm. The enzyme catalyses tRNA(Ala) + L-alanine + ATP = L-alanyl-tRNA(Ala) + AMP + diphosphate. In terms of biological role, catalyzes the attachment of alanine to tRNA(Ala) in a two-step reaction: alanine is first activated by ATP to form Ala-AMP and then transferred to the acceptor end of tRNA(Ala). Also edits incorrectly charged Ser-tRNA(Ala) and Gly-tRNA(Ala) via its editing domain. The sequence is that of Alanine--tRNA ligase from Chlamydia caviae (strain ATCC VR-813 / DSM 19441 / 03DC25 / GPIC) (Chlamydophila caviae).